Reading from the N-terminus, the 208-residue chain is Endo-1,4-beta-xylanase B (208 aa).

A signal peptide spans 1-16 (MKVTAAFAGLLATTLA). Residues 17–207 (APATELVTRS…GTGTASVTVS (191 aa)) enclose the GH11 domain. Glutamate 101 functions as the Nucleophile in the catalytic mechanism. Glutamate 194 serves as the catalytic Proton donor.

The protein belongs to the glycosyl hydrolase 11 (cellulase G) family.

Its subcellular location is the secreted. The enzyme catalyses Endohydrolysis of (1-&gt;4)-beta-D-xylosidic linkages in xylans.. Its pathway is glycan degradation; xylan degradation. Its activity is regulated as follows. N-bromosuccinimide completely inhibits the catalytic activity. Functionally, endo-1,4-beta-xylanase involved in the hydrolysis of xylan, a major structural heterogeneous polysaccharide found in plant biomass representing the second most abundant polysaccharide in the biosphere, after cellulose. The polypeptide is Endo-1,4-beta-xylanase B (xynB) (Talaromyces purpureogenus (Soft rot fungus)).